Consider the following 90-residue polypeptide: UPF0184 protein (90 aa).

A coiled-coil region spans residues 16–78; it reads DETKEEMVEL…QSLETEQNTE (63 aa). Positions 57–90 are disordered; the sequence is SQQARQELQAERQSLETEQNTEPSTKSDQEQKKQ. Basic and acidic residues predominate over residues 81–90; that stretch reads TKSDQEQKKQ.

This sequence belongs to the UPF0184 (EST00098) family.

This chain is UPF0184 protein, found in Branchiostoma floridae (Florida lancelet).